The following is a 102-amino-acid chain: A-type ATP synthase subunit F (102 aa).

It belongs to the V-ATPase F subunit family. In terms of assembly, has multiple subunits with at least A(3), B(3), C, D, E, F, H, I and proteolipid K(x).

It localises to the cell membrane. Its function is as follows. Component of the A-type ATP synthase that produces ATP from ADP in the presence of a proton gradient across the membrane. The sequence is that of A-type ATP synthase subunit F from Thermococcus sibiricus (strain DSM 12597 / MM 739).